Consider the following 466-residue polypeptide: tRNA modification GTPase MnmE (466 aa).

(6S)-5-formyl-5,6,7,8-tetrahydrofolate is bound by residues Arg24, Glu85, and Lys128. In terms of domain architecture, TrmE-type G spans 224–384 (GLNIVLAGQP…LRTELLHLVG (161 aa)). Residue Asn234 participates in K(+) binding. GTP contacts are provided by residues 234–239 (NVGKSS), 253–259 (TPIAGTT), and 278–281 (DTAG). Ser238 is a binding site for Mg(2+). 3 residues coordinate K(+): Thr253, Ile255, and Thr258. Mg(2+) is bound at residue Thr259. Residue Lys466 participates in (6S)-5-formyl-5,6,7,8-tetrahydrofolate binding.

The protein belongs to the TRAFAC class TrmE-Era-EngA-EngB-Septin-like GTPase superfamily. TrmE GTPase family. Homodimer. Heterotetramer of two MnmE and two MnmG subunits. It depends on K(+) as a cofactor.

It localises to the cytoplasm. Exhibits a very high intrinsic GTPase hydrolysis rate. Involved in the addition of a carboxymethylaminomethyl (cmnm) group at the wobble position (U34) of certain tRNAs, forming tRNA-cmnm(5)s(2)U34. This chain is tRNA modification GTPase MnmE, found in Herminiimonas arsenicoxydans.